We begin with the raw amino-acid sequence, 650 residues long: Acetyl-coenzyme A synthetase (650 aa).

CoA contacts are provided by residues 191–194 (RGGR), Thr-311, and Asn-335. Residues 387-389 (GEP), 411-416 (DTWWQT), Asp-500, and Arg-515 contribute to the ATP site. Ser-523 provides a ligand contact to CoA. Arg-526 contacts ATP. Residues Val-537, His-539, and Val-542 each contribute to the Mg(2+) site. Arg-584 contacts CoA. Lys-609 is modified (N6-acetyllysine).

Belongs to the ATP-dependent AMP-binding enzyme family. It depends on Mg(2+) as a cofactor. Post-translationally, acetylated. Deacetylation by the SIR2-homolog deacetylase activates the enzyme.

It carries out the reaction acetate + ATP + CoA = acetyl-CoA + AMP + diphosphate. Catalyzes the conversion of acetate into acetyl-CoA (AcCoA), an essential intermediate at the junction of anabolic and catabolic pathways. AcsA undergoes a two-step reaction. In the first half reaction, AcsA combines acetate with ATP to form acetyl-adenylate (AcAMP) intermediate. In the second half reaction, it can then transfer the acetyl group from AcAMP to the sulfhydryl group of CoA, forming the product AcCoA. The polypeptide is Acetyl-coenzyme A synthetase (Shewanella sp. (strain ANA-3)).